The sequence spans 1077 residues: Adenylate cyclase type 4 (1077 aa).

The Cytoplasmic portion of the chain corresponds to 1–28; sequence MARLFSPRPPPSEDLFYETYYSLSQQYP. The next 6 membrane-spanning stretches (helical) occupy residues 29–50, 61–80, 94–117, 120–138, 141–162, and 170–190; these read LLLL…VAWA, FLTT…GLAS, GLVW…VSAW, VSYF…PLGM, AAVA…YLGP, and LLPQ…AGVY. The Cytoplasmic segment spans residues 191 to 585; the sequence is HKALMERALR…YRLSAIPAFK (395 aa). 3 residues coordinate Mg(2+): aspartate 278, isoleucine 279, and aspartate 322. Residues 278–283, 320–322, and arginine 366 contribute to the ATP site; these read DIVGFT and LGD. Position 520 is a phosphoserine (serine 520). Threonine 536 carries the post-translational modification Phosphothreonine. 3 consecutive transmembrane segments (helical) span residues 586 to 607, 611 to 633, and 664 to 687; these read YYEA…LVTN, ALAI…CFSE, and IALG…FFPT. At 688 to 714 the chain is on the extracellular side; it reads SSDCPFQAPNVSSMISNLSWELPGSLP. 2 N-linked (GlcNAc...) asparagine glycosylation sites follow: asparagine 697 and asparagine 704. The next 3 helical transmembrane spans lie at 715-736, 744-764, and 791-807; these read LISV…SLFL, LLLL…SHAW, and MGAI…LVLA. Over 808–1077 the chain is Cytoplasmic; that stretch reads RQNEYYCRLD…RTGPPSATLG (270 aa). Residues lysine 925, 1005–1007, 1012–1016, and lysine 1052 contribute to the ATP site; these read DIW and NVASR.

The protein belongs to the adenylyl cyclase class-4/guanylyl cyclase family. Requires Mg(2+) as cofactor. It depends on Mn(2+) as a cofactor. Detected in the zona glomerulosa and the zona fasciculata in the adrenal gland (at protein level).

It localises to the cell membrane. The protein localises to the cytoplasm. It catalyses the reaction ATP = 3',5'-cyclic AMP + diphosphate. Its activity is regulated as follows. Activated by forskolin. Insensitive to calcium/calmodulin. Stimulated by GNAS and by the G-protein beta and gamma subunit complex. Catalyzes the formation of the signaling molecule cAMP in response to G-protein signaling. The protein is Adenylate cyclase type 4 (ADCY4) of Homo sapiens (Human).